We begin with the raw amino-acid sequence, 196 residues long: Nucleoid occlusion factor SlmA (196 aa).

In terms of domain architecture, HTH tetR-type spans 7–68 (SNRREEILQA…GLIEFIEEAL (62 aa)). Residues 31–50 (TTAKLAQQVGVSEAALYRHF) constitute a DNA-binding region (H-T-H motif). Residues 65 to 142 (EEALMSRINR…QLRQILRERK (78 aa)) adopt a coiled-coil conformation.

It belongs to the nucleoid occlusion factor SlmA family. Homodimer. Interacts with FtsZ.

It localises to the cytoplasm. The protein resides in the nucleoid. Functionally, required for nucleoid occlusion (NO) phenomenon, which prevents Z-ring formation and cell division over the nucleoid. Acts as a DNA-associated cell division inhibitor that binds simultaneously chromosomal DNA and FtsZ, and disrupts the assembly of FtsZ polymers. SlmA-DNA-binding sequences (SBS) are dispersed on non-Ter regions of the chromosome, preventing FtsZ polymerization at these regions. The sequence is that of Nucleoid occlusion factor SlmA from Vibrio vulnificus (strain CMCP6).